A 331-amino-acid chain; its full sequence is Glucokinase (331 aa).

13–18 (GDIGGT) is an ATP binding site.

It belongs to the bacterial glucokinase family.

The protein resides in the cytoplasm. The enzyme catalyses D-glucose + ATP = D-glucose 6-phosphate + ADP + H(+). In Caulobacter vibrioides (strain ATCC 19089 / CIP 103742 / CB 15) (Caulobacter crescentus), this protein is Glucokinase.